Reading from the N-terminus, the 185-residue chain is Sarcoplasmic calcium-binding proteins I, III, and IV (185 aa).

EF-hand domains are found at residues 5-41 (FQKQ…YKEV), 57-92 (SLED…TIAT), 102-137 (WCQN…FQLQ), and 138-173 (CADV…TSPA). Aspartate 19, asparagine 21, aspartate 23, serine 25, aspartate 30, aspartate 70, asparagine 72, aspartate 74, glutamate 81, aspartate 115, serine 117, aspartate 119, and glutamate 126 together coordinate Ca(2+).

In terms of biological role, like parvalbumins, SCPs seem to be more abundant in fast contracting muscles, but no functional relationship can be established from this distribution. In Branchiostoma lanceolatum (Common lancelet), this protein is Sarcoplasmic calcium-binding proteins I, III, and IV.